We begin with the raw amino-acid sequence, 378 residues long: Fetuin-B (378 aa).

The first 18 residues, 1 to 18 (MGVLRLLVLCTLAACCVA), serve as a signal peptide directing secretion. Cystatin fetuin-B-type domains are found at residues 28-141 (NAPF…YNCT) and 152-261 (SMCP…VSCE). A glycan (N-linked (GlcNAc...) asparagine) is linked at Asn-40. 5 disulfide bridges follow: Cys-96–Cys-107, Cys-120–Cys-140, Cys-154–Cys-157, Cys-217–Cys-224, and Cys-237–Cys-260. Asn-139 is a glycosylation site (N-linked (GlcNAc...) asparagine). Disordered regions lie at residues 266–338 (QDQV…PQGD) and 357–378 (LPFP…QRTP). Positions 286 to 297 (QKNTAPTSSPSI) are enriched in polar residues. O-linked (GalNAc...) threonine glycans are attached at residues Thr-289 and Thr-292. Residue Ser-316 is modified to Phosphoserine. Residues 362-378 (KEQRSPECPGPEKQRTP) are compositionally biased toward basic and acidic residues.

This sequence belongs to the fetuin family. In terms of tissue distribution, liver.

The protein resides in the secreted. Protease inhibitor required for egg fertilization. Required to prevent premature zona pellucida hardening before fertilization, probably by inhibiting the protease activity of ASTL, a protease that mediates the cleavage of ZP2 and triggers zona pellucida hardening. This chain is Fetuin-B (Fetub), found in Rattus norvegicus (Rat).